A 124-amino-acid chain; its full sequence is uncharacterized protein (124 aa).

The protein belongs to the YciI family.

This is an uncharacterized protein from Rhizobium meliloti (strain 1021) (Ensifer meliloti).